The chain runs to 287 residues: MAGAKEIRSKIASVQNTQKITKAMEMVAASKMRKTQERMASSRPYAETMRKVIGHLALGNLEYKHSYLDERDVKRVGYLVVATDRGLAGGLNINLFKKLLADMKEWNGKGVETELALIGSKAVSFFNSVGSKVVAQVTGMGDNPMLSELIGPVKVMLQAYDEGRLDKLYIVSNKFVNTMSQVPQILQILPLPPAEEADLKIKSWDYLYEPDPKTLLDTLLRRYVESQVYQGVVENLASEQAARMVAMKAATDNGGSLIKELQLVYNKARQTSITQELTEIVSGAAAV.

This sequence belongs to the ATPase gamma chain family. F-type ATPases have 2 components, CF(1) - the catalytic core - and CF(0) - the membrane proton channel. CF(1) has five subunits: alpha(3), beta(3), gamma(1), delta(1), epsilon(1). CF(0) has three main subunits: a, b and c.

The protein resides in the cell inner membrane. Produces ATP from ADP in the presence of a proton gradient across the membrane. The gamma chain is believed to be important in regulating ATPase activity and the flow of protons through the CF(0) complex. The protein is ATP synthase gamma chain of Sodalis glossinidius (strain morsitans).